Consider the following 461-residue polypeptide: BSD domain-containing protein 1 (461 aa).

2 positions are modified to phosphoserine: Ser123 and Ser197. The region spanning 177–229 is the BSD domain; the sequence is WLSQFCLEEKKGEISELLVGSPSIRALYTKMVPAAVSHSEFWHRYFYKVHQLE. The segment at 239-384 is disordered; it reads KQRAEQSISE…SGPEPRPPAR (146 aa). A compositionally biased stretch (acidic residues) spans 250-259; the sequence is PGWEEEEEEL. Residues 295-318 show a composition bias toward low complexity; the sequence is LVTPVEPPTEVTPSESSESVSLVT. Thr387 is subject to Phosphothreonine. Residues 398–430 form a disordered region; that stretch reads VFELNSDSGKSTPSNNGKKGSSTDISEDWEKDF. Residues 402–421 show a composition bias toward polar residues; that stretch reads NSDSGKSTPSNNGKKGSSTD. Residues Ser418, Ser419, and Ser449 each carry the phosphoserine modification.

The chain is BSD domain-containing protein 1 (BSDC1) from Bos taurus (Bovine).